A 225-amino-acid polypeptide reads, in one-letter code: Endonuclease V (225 aa).

Positions 43 and 110 each coordinate Mg(2+).

This sequence belongs to the endonuclease V family. Mg(2+) is required as a cofactor.

The protein localises to the cytoplasm. The enzyme catalyses Endonucleolytic cleavage at apurinic or apyrimidinic sites to products with a 5'-phosphate.. DNA repair enzyme involved in the repair of deaminated bases. Selectively cleaves double-stranded DNA at the second phosphodiester bond 3' to a deoxyinosine leaving behind the intact lesion on the nicked DNA. The sequence is that of Endonuclease V from Thermotoga neapolitana (strain ATCC 49049 / DSM 4359 / NBRC 107923 / NS-E).